The primary structure comprises 94 residues: DNA-directed RNA polymerase subunit omega (94 aa).

Belongs to the RNA polymerase subunit omega family. In terms of assembly, the RNAP catalytic core consists of 2 alpha, 1 beta, 1 beta' and 1 omega subunit. When a sigma factor is associated with the core the holoenzyme is formed, which can initiate transcription.

It carries out the reaction RNA(n) + a ribonucleoside 5'-triphosphate = RNA(n+1) + diphosphate. In terms of biological role, promotes RNA polymerase assembly. Latches the N- and C-terminal regions of the beta' subunit thereby facilitating its interaction with the beta and alpha subunits. The polypeptide is DNA-directed RNA polymerase subunit omega (Bifidobacterium longum (strain DJO10A)).